We begin with the raw amino-acid sequence, 409 residues long: Effector protein BipC (409 aa).

Disordered regions lie at residues 268-287 (RETGESVRHEIDPGGERMSD) and 330-396 (SGGQ…VAND). Over residues 360-369 (AQQTAMAAAS) the composition is skewed to low complexity. Positions 370–382 (ARDEAAHRGRDAA) are enriched in basic and acidic residues.

It belongs to the SctB/SipC family.

Its subcellular location is the secreted. The polypeptide is Effector protein BipC (bipC) (Burkholderia thailandensis (strain ATCC 700388 / DSM 13276 / CCUG 48851 / CIP 106301 / E264)).